Here is a 220-residue protein sequence, read N- to C-terminus: Competence protein ComFC (220 aa).

This sequence belongs to the ComF/GntX family. Monomer and dimer in solution. Interacts with ComFA and DprA; ComFA-ComFC form rings about 150 Angstroms in diameter with apparent 6-fold symmetry.

In terms of biological role, involved in transformation (genetic competence for DNA uptake). This chain is Competence protein ComFC, found in Streptococcus pneumoniae (strain ATCC BAA-255 / R6).